The following is a 237-amino-acid chain: Putative N-acetylmannosamine-6-phosphate 2-epimerase (237 aa).

This sequence belongs to the NanE family.

The catalysed reaction is an N-acyl-D-glucosamine 6-phosphate = an N-acyl-D-mannosamine 6-phosphate. It functions in the pathway amino-sugar metabolism; N-acetylneuraminate degradation; D-fructose 6-phosphate from N-acetylneuraminate: step 3/5. Its function is as follows. Converts N-acetylmannosamine-6-phosphate (ManNAc-6-P) to N-acetylglucosamine-6-phosphate (GlcNAc-6-P). The protein is Putative N-acetylmannosamine-6-phosphate 2-epimerase of Caldanaerobacter subterraneus subsp. tengcongensis (strain DSM 15242 / JCM 11007 / NBRC 100824 / MB4) (Thermoanaerobacter tengcongensis).